Consider the following 470-residue polypeptide: Uronate isomerase (470 aa).

The protein belongs to the metallo-dependent hydrolases superfamily. Uronate isomerase family.

The catalysed reaction is D-glucuronate = D-fructuronate. It catalyses the reaction aldehydo-D-galacturonate = keto-D-tagaturonate. It functions in the pathway carbohydrate metabolism; pentose and glucuronate interconversion. This Shigella boydii serotype 4 (strain Sb227) protein is Uronate isomerase.